The sequence spans 407 residues: ATP phosphoribosyltransferase regulatory subunit (407 aa).

This sequence belongs to the class-II aminoacyl-tRNA synthetase family. HisZ subfamily. In terms of assembly, heteromultimer composed of HisG and HisZ subunits.

The protein localises to the cytoplasm. Its pathway is amino-acid biosynthesis; L-histidine biosynthesis; L-histidine from 5-phospho-alpha-D-ribose 1-diphosphate: step 1/9. In terms of biological role, required for the first step of histidine biosynthesis. May allow the feedback regulation of ATP phosphoribosyltransferase activity by histidine. This is ATP phosphoribosyltransferase regulatory subunit from Rippkaea orientalis (strain PCC 8801 / RF-1) (Cyanothece sp. (strain PCC 8801)).